A 1103-amino-acid polypeptide reads, in one-letter code: Coatomer subunit beta (1103 aa).

HEAT repeat units follow at residues glutamate 51–aspartate 89, glutamate 94–lysine 129, valine 130–leucine 166, glutamine 247–serine 284, arginine 322–valine 359, valine 365–glutamate 404, and alanine 405–histidine 441.

Oligomeric complex that consists of at least the alpha, beta, beta', gamma, delta, epsilon and zeta subunits.

Its subcellular location is the cytoplasm. The protein localises to the golgi apparatus membrane. The protein resides in the cytoplasmic vesicle. It is found in the COPI-coated vesicle membrane. Functionally, the coatomer is a cytosolic protein complex that binds to dilysine motifs and reversibly associates with Golgi non-clathrin-coated vesicles, which further mediate biosynthetic protein transport from the ER, via the Golgi up to the trans Golgi network. Coatomer complex is required for budding from Golgi membranes, and is essential for the retrograde Golgi-to-ER transport of dilysine-tagged proteins. The polypeptide is Coatomer subunit beta (Toxoplasma gondii).